Consider the following 54-residue polypeptide: uncharacterized protein (54 aa).

The helical transmembrane segment at 6 to 26 (ILIYLLIFVAGIVIGKIRINV) threads the bilayer.

It localises to the host membrane. This is an uncharacterized protein from Acidianus convivator (ABV).